The following is a 277-amino-acid chain: Outer membrane lipoprotein 1 (277 aa).

The N-terminal stretch at 1–19 (MSFKKILGVALVSALALTA) is a signal peptide. Cysteine 20 is lipidated: N-palmitoyl cysteine. Residue cysteine 20 is the site of S-diacylglycerol cysteine attachment.

This sequence belongs to the NlpA lipoprotein family.

The protein localises to the cell outer membrane. This is Outer membrane lipoprotein 1 (plpA) from Mannheimia haemolytica (Pasteurella haemolytica).